The primary structure comprises 247 residues: 5-oxoprolinase subunit A (247 aa).

The protein belongs to the LamB/PxpA family. Forms a complex composed of PxpA, PxpB and PxpC.

It carries out the reaction 5-oxo-L-proline + ATP + 2 H2O = L-glutamate + ADP + phosphate + H(+). Catalyzes the cleavage of 5-oxoproline to form L-glutamate coupled to the hydrolysis of ATP to ADP and inorganic phosphate. This Vibrio vulnificus (strain YJ016) protein is 5-oxoprolinase subunit A.